Consider the following 40-residue polypeptide: Photosystem II reaction center protein J (40 aa).

The helical transmembrane segment at 8–28 (IPLWLIGTVTGIPVIGLIGIF) threads the bilayer.

This sequence belongs to the PsbJ family. PSII is composed of 1 copy each of membrane proteins PsbA, PsbB, PsbC, PsbD, PsbE, PsbF, PsbH, PsbI, PsbJ, PsbK, PsbL, PsbM, PsbT, PsbX, PsbY, PsbZ, Psb30/Ycf12, at least 3 peripheral proteins of the oxygen-evolving complex and a large number of cofactors. It forms dimeric complexes.

The protein resides in the plastid. It is found in the chloroplast thylakoid membrane. One of the components of the core complex of photosystem II (PSII). PSII is a light-driven water:plastoquinone oxidoreductase that uses light energy to abstract electrons from H(2)O, generating O(2) and a proton gradient subsequently used for ATP formation. It consists of a core antenna complex that captures photons, and an electron transfer chain that converts photonic excitation into a charge separation. The sequence is that of Photosystem II reaction center protein J from Vitis vinifera (Grape).